Here is a 108-residue protein sequence, read N- to C-terminus: MILQRLFRLSSAVQSAISVSWRRNIGITAVAFNKELDPVQKLFVDKIREYRTKRQTSGGPVDAGPEYQQDLDRELFKLKQMYGKADMNTFPNFTFEDPKFEVVEKPQS.

The N-terminal 32 residues, 1 to 32, are a transit peptide targeting the mitochondrion; the sequence is MILQRLFRLSSAVQSAISVSWRRNIGITAVAF. An N6-acetyllysine mark is found at Lys41, Lys46, and Lys79. Lys84 and Lys99 each carry N6-acetyllysine; alternate. Lys84 and Lys99 each carry N6-succinyllysine; alternate. N6-acetyllysine is present on Lys105. Position 108 is a phosphoserine (Ser108).

Belongs to the eukaryotic ATPase subunit F6 family. As to quaternary structure, component of the ATP synthase complex composed at least of ATP5F1A/subunit alpha, ATP5F1B/subunit beta, ATP5MC1/subunit c (homooctomer), MT-ATP6/subunit a, MT-ATP8/subunit 8, ATP5ME/subunit e, ATP5MF/subunit f, ATP5MG/subunit g, ATP5MK/subunit k, ATP5MJ/subunit j, ATP5F1C/subunit gamma, ATP5F1D/subunit delta, ATP5F1E/subunit epsilon, ATP5PF/subunit F6, ATP5PB/subunit b, ATP5PD/subunit d, ATP5PO/subunit OSCP. ATP synthase complex consists of a soluble F(1) head domain (subunits alpha(3) and beta(3)) - the catalytic core - and a membrane F(0) domain - the membrane proton channel (subunits c, a, 8, e, f, g, k and j). These two domains are linked by a central stalk (subunits gamma, delta, and epsilon) rotating inside the F1 region and a stationary peripheral stalk (subunits F6, b, d, and OSCP).

The protein resides in the mitochondrion. It is found in the mitochondrion inner membrane. Functionally, subunit F6, of the mitochondrial membrane ATP synthase complex (F(1)F(0) ATP synthase or Complex V) that produces ATP from ADP in the presence of a proton gradient across the membrane which is generated by electron transport complexes of the respiratory chain. ATP synthase complex consist of a soluble F(1) head domain - the catalytic core - and a membrane F(1) domain - the membrane proton channel. These two domains are linked by a central stalk rotating inside the F(1) region and a stationary peripheral stalk. During catalysis, ATP synthesis in the catalytic domain of F(1) is coupled via a rotary mechanism of the central stalk subunits to proton translocation. In vivo, can only synthesize ATP although its ATP hydrolase activity can be activated artificially in vitro. Part of the complex F(0) domain. Part of the complex F(0) domain and the peripheric stalk, which acts as a stator to hold the catalytic alpha(3)beta(3) subcomplex and subunit a/ATP6 static relative to the rotary elements. This is ATP synthase peripheral stalk subunit F6, mitochondrial from Bos taurus (Bovine).